We begin with the raw amino-acid sequence, 210 residues long: Guanylate kinase (210 aa).

The Guanylate kinase-like domain occupies G6–R184. An ATP-binding site is contributed by A13–T20.

Belongs to the guanylate kinase family.

The protein localises to the cytoplasm. The enzyme catalyses GMP + ATP = GDP + ADP. In terms of biological role, essential for recycling GMP and indirectly, cGMP. This chain is Guanylate kinase, found in Chromobacterium violaceum (strain ATCC 12472 / DSM 30191 / JCM 1249 / CCUG 213 / NBRC 12614 / NCIMB 9131 / NCTC 9757 / MK).